The primary structure comprises 286 residues: Bifunctional protein FolD (286 aa).

NADP(+) is bound by residues 165–167, S190, and V231; that span reads GRS.

It belongs to the tetrahydrofolate dehydrogenase/cyclohydrolase family. As to quaternary structure, homodimer.

The catalysed reaction is (6R)-5,10-methylene-5,6,7,8-tetrahydrofolate + NADP(+) = (6R)-5,10-methenyltetrahydrofolate + NADPH. It catalyses the reaction (6R)-5,10-methenyltetrahydrofolate + H2O = (6R)-10-formyltetrahydrofolate + H(+). It participates in one-carbon metabolism; tetrahydrofolate interconversion. Its function is as follows. Catalyzes the oxidation of 5,10-methylenetetrahydrofolate to 5,10-methenyltetrahydrofolate and then the hydrolysis of 5,10-methenyltetrahydrofolate to 10-formyltetrahydrofolate. The polypeptide is Bifunctional protein FolD (Bacillus cytotoxicus (strain DSM 22905 / CIP 110041 / 391-98 / NVH 391-98)).